The chain runs to 437 residues: Succinyl-CoA:cyclohexane-1-carboxylate CoA transferase (437 aa).

Position 221 to 225 (221 to 225) interacts with CoA; it reads GWGGI. The 5-glutamyl coenzyme A thioester intermediate role is filled by E244. 3 residues coordinate CoA: L319, G342, and K367.

It belongs to the acetyl-CoA hydrolase/transferase family. Homodimer.

The enzyme catalyses cyclohexane-1-carboxylate + succinyl-CoA = cyclohexane-1-carbonyl-CoA + succinate. It catalyses the reaction cyclohexane-1-carboxylate + butanoyl-CoA = cyclohexane-1-carbonyl-CoA + butanoate. Functionally, acyl-CoA transferase involved in the anaerobic degradation of cyclohexane carboxylic acid (CHC). Catalyzes the activation of CHC to cyclohexane-1-carbonyl-CoA (CHCoA). Benzoic acid and cyclohex-1-ene-1-carboxylic acid can also be used as substrates, but with lower specific activity. Shows highest activity with succinyl-CoA and butanoyl-coA as a CoA donor, and lower activity with crotonyl-CoA, acetyl-CoA, glutaryl-CoA, CH1eneCoA, propionyl-CoA and acetoacetyl-CoA. In vitro, the enzyme can use butanoyl-coA as a CoA donor with greater efficiency than succinyl-CoA. However, succinyl-CoA is the most abundant CoA ester in exponentially grown cells, whereas butanoyl-coA is hardly detectable, indicating that succinyl-CoA is the natural CoA donor for CHC activation. In Geobacter metallireducens (strain ATCC 53774 / DSM 7210 / GS-15), this protein is Succinyl-CoA:cyclohexane-1-carboxylate CoA transferase.